Here is a 371-residue protein sequence, read N- to C-terminus: Cytochrome b (371 aa).

4 helical membrane-spanning segments follow: residues 25–45, 69–90, 105–125, and 170–190; these read FGSM…FLAI, WIMQ…YIHI, WLSG…GYVL, and FFAL…IHIM. Residues His75 and His89 each coordinate heme b. His174 and His188 together coordinate heme b. His193 provides a ligand contact to a ubiquinone. The next 4 helical transmembrane spans lie at 218–238, 280–300, 312–332, and 339–358; these read HKDI…MSFS, LGGT…PFTH, IMQL…WAAT, and FTII…IMNP.

Belongs to the cytochrome b family. In terms of assembly, the cytochrome bc1 complex contains 3 respiratory subunits (MT-CYB, CYC1 and UQCRFS1), 2 core proteins (UQCRC1 and UQCRC2) and probably 6 low-molecular weight proteins. The cofactor is heme b.

It is found in the mitochondrion inner membrane. Its function is as follows. Component of the ubiquinol-cytochrome c reductase complex (complex III or cytochrome b-c1 complex) that is part of the mitochondrial respiratory chain. The b-c1 complex mediates electron transfer from ubiquinol to cytochrome c. Contributes to the generation of a proton gradient across the mitochondrial membrane that is then used for ATP synthesis. This is Cytochrome b (MT-CYB) from Coluber constrictor (Eastern racer).